A 996-amino-acid polypeptide reads, in one-letter code: Alanine--tRNA ligase, chloroplastic/mitochondrial (996 aa).

Positions 677, 681, 779, and 783 each coordinate Zn(2+).

It belongs to the class-II aminoacyl-tRNA synthetase family. In terms of assembly, monomer. Requires Zn(2+) as cofactor.

The protein localises to the plastid. It localises to the chloroplast. Its subcellular location is the mitochondrion. The enzyme catalyses tRNA(Ala) + L-alanine + ATP = L-alanyl-tRNA(Ala) + AMP + diphosphate. Catalyzes the attachment of alanine to tRNA(Ala) in a two-step reaction: alanine is first activated by ATP to form Ala-AMP and then transferred to the acceptor end of tRNA(Ala). Also edits incorrectly charged tRNA(Ala) via its editing domain. The chain is Alanine--tRNA ligase, chloroplastic/mitochondrial from Oryza sativa subsp. indica (Rice).